Reading from the N-terminus, the 146-residue chain is uncharacterized protein (146 aa).

A signal peptide spans 1–26 (MQFRPSIALVLSIVGILSLEISWTDG).

Prismatic layer of shell (at protein level). Expressed primarily in the mantle with highest level in the mantle edge and lower level in the mantle pallium.

Its subcellular location is the secreted. This is an uncharacterized protein from Margaritifera margaritifera (Freshwater pearl mussel).